Here is a 350-residue protein sequence, read N- to C-terminus: Quinolinate phosphoribosyltransferase [decarboxylating] 1 (350 aa).

Residues R141, 172 to 174 (TRK), R196, K206, E239, D266, 298 to 300 (SGN), and 319 to 321 (SGA) contribute to the substrate site.

This sequence belongs to the NadC/ModD family.

The catalysed reaction is nicotinate beta-D-ribonucleotide + CO2 + diphosphate = quinolinate + 5-phospho-alpha-D-ribose 1-diphosphate + 2 H(+). It participates in alkaloid biosynthesis; nicotine biosynthesis. It functions in the pathway cofactor biosynthesis; NAD(+) biosynthesis; nicotinate D-ribonucleotide from quinolinate: step 1/1. Its function is as follows. Involved in the biosynthesis of pyridine alkaloid natural products, leading mainly to the production of anabasine, anatabine, nicotine and nornicotine, effective deterrents against herbivores with antiparasitic and pesticide properties (neurotoxins); nornicotine serves as the precursor in the synthesis of the carcinogen compound N'-nitrosonornicotine (NNN). Involved in the catabolism of quinolinic acid (QA). In Nicotiana glauca (Glaucous tobacco), this protein is Quinolinate phosphoribosyltransferase [decarboxylating] 1.